Consider the following 197-residue polypeptide: LexA repressor (197 aa).

The segment at residues 28–47 is a DNA-binding region (H-T-H motif); the sequence is VREIARRFRITPRGALLHLI. Catalysis depends on for autocatalytic cleavage activity residues serine 119 and lysine 156.

The protein belongs to the peptidase S24 family. In terms of assembly, homodimer.

The catalysed reaction is Hydrolysis of Ala-|-Gly bond in repressor LexA.. In terms of biological role, represses a number of genes involved in the response to DNA damage (SOS response), including recA and lexA. In the presence of single-stranded DNA, RecA interacts with LexA causing an autocatalytic cleavage which disrupts the DNA-binding part of LexA, leading to derepression of the SOS regulon and eventually DNA repair. This Thermotoga maritima (strain ATCC 43589 / DSM 3109 / JCM 10099 / NBRC 100826 / MSB8) protein is LexA repressor.